We begin with the raw amino-acid sequence, 329 residues long: GTP 3',8-cyclase 1 (329 aa).

Positions 7–230 (GQGRQIDYLR…LDSAEQSGGP (224 aa)) constitute a Radical SAM core domain. Arg16 contributes to the GTP binding site. Residues Cys23 and Cys27 each contribute to the [4Fe-4S] cluster site. Position 29 (Tyr29) interacts with S-adenosyl-L-methionine. Position 30 (Cys30) interacts with [4Fe-4S] cluster. Residue Arg65 coordinates GTP. Residue Gly69 participates in S-adenosyl-L-methionine binding. Thr96 provides a ligand contact to GTP. Ser120 provides a ligand contact to S-adenosyl-L-methionine. GTP is bound at residue Lys157. Position 191 (Met191) interacts with S-adenosyl-L-methionine. Residues Cys255 and Cys258 each contribute to the [4Fe-4S] cluster site. 260-262 (RLR) contributes to the GTP binding site. Cys272 contributes to the [4Fe-4S] cluster binding site.

It belongs to the radical SAM superfamily. MoaA family. As to quaternary structure, monomer and homodimer. [4Fe-4S] cluster is required as a cofactor.

The catalysed reaction is GTP + AH2 + S-adenosyl-L-methionine = (8S)-3',8-cyclo-7,8-dihydroguanosine 5'-triphosphate + 5'-deoxyadenosine + L-methionine + A + H(+). It functions in the pathway cofactor biosynthesis; molybdopterin biosynthesis. Its function is as follows. Catalyzes the cyclization of GTP to (8S)-3',8-cyclo-7,8-dihydroguanosine 5'-triphosphate. The polypeptide is GTP 3',8-cyclase 1 (moaA1) (Pseudomonas aeruginosa (strain ATCC 15692 / DSM 22644 / CIP 104116 / JCM 14847 / LMG 12228 / 1C / PRS 101 / PAO1)).